Here is a 167-residue protein sequence, read N- to C-terminus: LIM domain transcription factor LMO4.1 (167 aa).

Residues 1–17 (MVNNRVTESTTTAVSSN) show a composition bias toward polar residues. The tract at residues 1-20 (MVNNRVTESTTTAVSSNGGP) is disordered. 2 consecutive LIM zinc-binding domains span residues 22-84 (KACA…LFGS) and 86-148 (GACS…GLLS).

Functionally, acts as a positive cofactor of GATA transcription factors to establish the identity of the ventral mesoderm during gastrulation. Down-regulation in the dorsal mesoderm is necessary for the proper formation of this territory since, when present, lmo4 may bind ldb1 and restrict the availability of this cofactor for Spemman organizer transcription factors. At neurula stages, suppresses primary neuron differentiation and modulates gene expression at the Isthmic Organizer of the midbrain-hindbrain boundary. The chain is LIM domain transcription factor LMO4.1 (lmo4.1) from Xenopus tropicalis (Western clawed frog).